Consider the following 346-residue polypeptide: GTPase Obg (346 aa).

Residues 1–158 (MKFLDQVKIY…RAIWLRLKLI (158 aa)) enclose the Obg domain. The OBG-type G domain maps to 159–327 (ADVGLVGLPN…LLREAFALVR (169 aa)). GTP contacts are provided by residues 165-172 (GLPNAGKS), 190-194 (FTTLA), 212-215 (DIPG), 279-282 (NKID), and 308-310 (SGF). Mg(2+)-binding residues include Ser-172 and Thr-192.

Belongs to the TRAFAC class OBG-HflX-like GTPase superfamily. OBG GTPase family. In terms of assembly, monomer. It depends on Mg(2+) as a cofactor.

It localises to the cytoplasm. Functionally, an essential GTPase which binds GTP, GDP and possibly (p)ppGpp with moderate affinity, with high nucleotide exchange rates and a fairly low GTP hydrolysis rate. Plays a role in control of the cell cycle, stress response, ribosome biogenesis and in those bacteria that undergo differentiation, in morphogenesis control. This is GTPase Obg from Phenylobacterium zucineum (strain HLK1).